The primary structure comprises 104 residues: Gastrin (104 aa).

The signal sequence occupies residues 1-21; it reads MPRLCVCMLVLVLALATFSEA. Positions 22–58 are excised as a propeptide; it reads SWKPRSQLQDASSGPRTNGALEQHQLEKLGPASHHRR. Positions 23-104 are disordered; sequence WKPRSQLQDA…RSAEEEDQYN (82 aa). Residues 25–37 show a composition bias toward polar residues; the sequence is PRSQLQDASSGPR. Tyr87 is subject to Sulfotyrosine. Phenylalanine amide is present on Phe92. A Phosphoserine modification is found at Ser96. The propeptide occupies 96 to 104; that stretch reads SAEEEDQYN. Tyr103 carries the sulfotyrosine modification.

It belongs to the gastrin/cholecystokinin family. In terms of processing, sulfation on Tyr-87 enhances proteolytic processing, and blocks peptide degradation. Levels of sulfation differ between proteolytically-cleaved gastrins and between tissues.

Its subcellular location is the secreted. Functionally, gastrin stimulates the stomach mucosa to produce and secrete hydrochloric acid and the pancreas to secrete its digestive enzymes. It also stimulates smooth muscle contraction and increases blood circulation and water secretion in the stomach and intestine. The sequence is that of Gastrin (Gast) from Rattus norvegicus (Rat).